Here is a 198-residue protein sequence, read N- to C-terminus: Recombination protein RecR (198 aa).

Residues 57 to 72 (CSICGNLTDEDPCAIC) form a C4-type zinc finger. The Toprim domain occupies 80-175 (STILIVEDSR…KVTRLARGLA (96 aa)).

This sequence belongs to the RecR family.

May play a role in DNA repair. It seems to be involved in an RecBC-independent recombinational process of DNA repair. It may act with RecF and RecO. The protein is Recombination protein RecR of Streptococcus gordonii (strain Challis / ATCC 35105 / BCRC 15272 / CH1 / DL1 / V288).